Here is a 221-residue protein sequence, read N- to C-terminus: Transcription factor MYB1 (221 aa).

HTH myb-type domains are found at residues 1 to 57 and 58 to 112; these read MESV…LNYL and RPNI…QKKL. 2 consecutive DNA-binding regions (H-T-H motif) follow at residues 33–57 and 85–108; these read WHQV…LNYL and WSLI…NTHL. The tract at residues 126-154 is disordered; sequence KTIVPKGTEAQPRAHPKSPPRPSPPSNNE.

As to expression, expressed in stems and leaves. Expressed at low levels in ovaries.

Its subcellular location is the nucleus. Functionally, transcription activator involved in the regulation of anthocyanin biosynthesis in red-fleshed kiwifruit varieties. Activates the transcription of genes involved in anthocyanin biosynthesis, such as dihydroflavonol reductase (DFR), anthocyanidin synthase (ANS) and UDP flavonoid glycosyltransferase (UFGT). This Actinidia chinensis var. chinensis (Chinese soft-hair kiwi) protein is Transcription factor MYB1.